The primary structure comprises 200 residues: Mediator of RNA polymerase II transcription subunit 29 (200 aa).

Composition is skewed to low complexity over residues 1–20 and 36–48; these read MAAS…VSGP and AQLV…GLLQ. The tract at residues 1 to 48 is disordered; sequence MAASQQQASATTSTASVSGPGSAGGSGPQQQPQPPAQLVGPAQSGLLQ. Position 2 is an N-acetylalanine (Ala-2).

It belongs to the Mediator complex subunit 29 family. Component of the TRAP/SMCC mediator complex. Interacts with MED20/TRFP. Associates with the MED18-MED20 heteromer.

It localises to the nucleus. Its function is as follows. Component of the mediator complex, a complex that can either repress or activate transcription. Mediator complexes are essential for basal and regulated expression of nearly all RNA polymerase II-dependent genes. They may act as a bridge, conveying regulatory information from enhancers and other control elements to the promoter. This Bos taurus (Bovine) protein is Mediator of RNA polymerase II transcription subunit 29 (MED29).